Consider the following 251-residue polypeptide: Small ribosomal subunit protein uS2 (251 aa).

Position 2 is an N-acetylserine (Ser2). The disordered stretch occupies residues 213-251 (QVAEEATAAADEDVKEEVAEEQTEAADWAEGNTEEVASW). Acidic residues predominate over residues 222–236 (ADEDVKEEVAEEQTE).

The protein belongs to the universal ribosomal protein uS2 family. In terms of assembly, component of the small ribosomal subunit. Mature ribosomes consist of a small (40S) and a large (60S) subunit. The 40S subunit contains about 33 different proteins and 1 molecule of RNA (18S). The 60S subunit contains about 49 different proteins and 3 molecules of RNA (25S, 5.8S and 5S). Interacts with RPS21.

It is found in the cytoplasm. Its function is as follows. Required for the assembly and/or stability of the 40S ribosomal subunit. Required for the processing of the 20S rRNA-precursor to mature 18S rRNA in a late step of the maturation of 40S ribosomal subunits. The chain is Small ribosomal subunit protein uS2 from Lachancea thermotolerans (strain ATCC 56472 / CBS 6340 / NRRL Y-8284) (Yeast).